The primary structure comprises 844 residues: Beta-mannosidase B (844 aa).

E432 functions as the Proton donor in the catalytic mechanism.

Belongs to the glycosyl hydrolase 2 family. Beta-mannosidase B subfamily.

It carries out the reaction Hydrolysis of terminal, non-reducing beta-D-mannose residues in beta-D-mannosides.. The protein operates within glycan metabolism; N-glycan degradation. In terms of biological role, exoglycosidase that cleaves the single beta-linked mannose residue from the non-reducing end of beta-mannosidic oligosaccharides of various complexity and length. Prefers mannobiose over mannotriose and has no activity against polymeric mannan. Is also severely restricted by galactosyl substitutions at the +1 subsite. This Aspergillus oryzae (strain ATCC 42149 / RIB 40) (Yellow koji mold) protein is Beta-mannosidase B (mndB).